Here is a 352-residue protein sequence, read N- to C-terminus: B1 bradykinin receptor (352 aa).

Topologically, residues 1–41 (MASWPPLELQSSNQSQLFPQNATACDNAPEAWDLLHRVLPT) are extracellular. N13 and N21 each carry an N-linked (GlcNAc...) asparagine glycan. The chain crosses the membrane as a helical span at residues 42 to 62 (FIISICSFGLLGNLFVLLVFL). Residues 63 to 72 (LPRRRLNVAE) lie on the Cytoplasmic side of the membrane. A helical membrane pass occupies residues 73–93 (IYLANLAASDLVFVLGLPFWA). Over 94 to 110 (ENIWNQFNWPFGALLCR) the chain is Extracellular. C109 and C188 are disulfide-bonded. The helical transmembrane segment at 111–131 (GINGVIKANLFISIFLVVAIS) threads the bilayer. At 132–153 (QDRYCLLVHPMASRRRQRRRQA) the chain is on the cytoplasmic side. A helical membrane pass occupies residues 154-174 (RVTCVLIWVVGGLLSIPTFLL). The Extracellular portion of the chain corresponds to 175 to 206 (RSIQAVPDLNITACILLLPHEAWHFARIVELN). Residue N184 is glycosylated (N-linked (GlcNAc...) asparagine). The helical transmembrane segment at 207–227 (ILAFLLPLAAIVFFNYHILAS) threads the bilayer. Residues 228–250 (LRGREEVSRTRCGGRKDSKTTAL) are Cytoplasmic-facing. The chain crosses the membrane as a helical span at residues 251-271 (ILTLVVAFLVCWAPYHFFAFL). Residues 272–294 (EFLFQVQAIRSCFWEDFIDLGLQ) are Extracellular-facing. A helical transmembrane segment spans residues 295–315 (LANFLAFTNSSLNPVIYVFVG). The Cytoplasmic segment spans residues 316–352 (RLFRTKVWELYKQCTPKSLAPISSSHRKEIFQLFWRN). C329 carries the S-palmitoyl cysteine lipid modification.

It belongs to the G-protein coupled receptor 1 family. Bradykinin receptor subfamily. BDKRB1 sub-subfamily.

The protein resides in the cell membrane. Its function is as follows. This is a receptor for bradykinin. Could be a factor in chronic pain and inflammation. This Chlorocebus pygerythrus (Vervet monkey) protein is B1 bradykinin receptor (BDKRB1).